The primary structure comprises 180 residues: Large ribosomal subunit protein uL5 (180 aa).

This sequence belongs to the universal ribosomal protein uL5 family. Part of the 50S ribosomal subunit; part of the 5S rRNA/L5/L18/L25 subcomplex. Contacts the 5S rRNA and the P site tRNA. Forms a bridge to the 30S subunit in the 70S ribosome.

This is one of the proteins that bind and probably mediate the attachment of the 5S RNA into the large ribosomal subunit, where it forms part of the central protuberance. In the 70S ribosome it contacts protein S13 of the 30S subunit (bridge B1b), connecting the 2 subunits; this bridge is implicated in subunit movement. Contacts the P site tRNA; the 5S rRNA and some of its associated proteins might help stabilize positioning of ribosome-bound tRNAs. This chain is Large ribosomal subunit protein uL5, found in Clostridium tetani (strain Massachusetts / E88).